The primary structure comprises 202 residues: MSYLVPMVIEQTNRGERSYDIYSRLLKDRIIFLGGPVTDDVANLVVAQMLFLEAEDPEKDIFLYINSPGGSISAGMAIYDTMQYIRADVHTICVGLAASMGAFLLTAGAKGKRQALPNAEILIHQPLIGGGGISGQATEIEIHAKHLLRVKERMNRILAERTGQTIERIEADTDRDRYMTAEEAKEYGLIDEVLEKPNQPKK.

The Nucleophile role is filled by Ser-99. Residue His-124 is part of the active site.

This sequence belongs to the peptidase S14 family. Fourteen ClpP subunits assemble into 2 heptameric rings which stack back to back to give a disk-like structure with a central cavity, resembling the structure of eukaryotic proteasomes.

The protein resides in the cytoplasm. It catalyses the reaction Hydrolysis of proteins to small peptides in the presence of ATP and magnesium. alpha-casein is the usual test substrate. In the absence of ATP, only oligopeptides shorter than five residues are hydrolyzed (such as succinyl-Leu-Tyr-|-NHMec, and Leu-Tyr-Leu-|-Tyr-Trp, in which cleavage of the -Tyr-|-Leu- and -Tyr-|-Trp bonds also occurs).. Functionally, cleaves peptides in various proteins in a process that requires ATP hydrolysis. Has a chymotrypsin-like activity. Plays a major role in the degradation of misfolded proteins. This chain is ATP-dependent Clp protease proteolytic subunit 2, found in Desulfitobacterium hafniense (strain Y51).